Consider the following 142-residue polypeptide: Hemoglobin A subunit alpha-2 (142 aa).

The region spanning 2–142 (VLTAGDKANV…VAQNLTSKYR (141 aa)) is the Globin domain. H59 contacts O2. H88 lines the heme b pocket.

The protein belongs to the globin family. Tetramer of alpha-1, alpha-2 and two identical beta chains. As to expression, red blood cells.

Its function is as follows. Involved in oxygen transport from the lung to the various peripheral tissues. The sequence is that of Hemoglobin A subunit alpha-2 from Aldabrachelys gigantea (Aldabra giant tortoise).